We begin with the raw amino-acid sequence, 463 residues long: Argininosuccinate lyase (463 aa).

Belongs to the lyase 1 family. Argininosuccinate lyase subfamily.

It localises to the cytoplasm. It carries out the reaction 2-(N(omega)-L-arginino)succinate = fumarate + L-arginine. The protein operates within amino-acid biosynthesis; L-arginine biosynthesis; L-arginine from L-ornithine and carbamoyl phosphate: step 3/3. This Thiobacillus denitrificans (strain ATCC 25259 / T1) protein is Argininosuccinate lyase.